The chain runs to 387 residues: MTMEGASGSSFGIDTILSSASSGSPGMMNGDFRPLGEARTADFRSQATPSPCSEIDTVGTAPSSPISVTMEPPEPHLVADATQHHHHLHHSQQPPPPAAAPTQSLQPLPQQQQPLPPQQPPPPPPQQLGSAASAPRTSTSSFLIKDILGDSKPLAACAPYSTSVSSPHHTPKQESNAVHESFRPKLEQEDSKTKLDKREDSQSDIKCHGTKEEGDREITSSRESPPVRAKKPRKARTAFSDHQLNQLERSFERQKYLSVQDRMDLAAALNLTDTQVKTWYQNRRTKWKRQTAVGLELLAEAGNYSALQRMFPSPYFYHPSLLGSMDSTTAAAAAAAMYSSMYRTPPAPHPQLQRPLVPRVLIHGLGPGGQPALNPLSSPIPGTPHPR.

Disordered regions lie at residues 1–145, 157–240, and 367–387; these read MTME…FLIK, CAPY…TAFS, and PGGQPALNPLSSPIPGTPHPR. Over residues 7–24 the composition is skewed to polar residues; that stretch reads SGSSFGIDTILSSASSGS. Positions 100 to 113 are enriched in low complexity; sequence APTQSLQPLPQQQQ. Over residues 114 to 126 the composition is skewed to pro residues; it reads PLPPQQPPPPPPQ. The segment covering 127-141 has biased composition (low complexity); the sequence is QLGSAASAPRTSTSS. A compositionally biased stretch (polar residues) spans 160 to 178; the sequence is YSTSVSSPHHTPKQESNAV. Residues 180 to 220 are compositionally biased toward basic and acidic residues; the sequence is ESFRPKLEQEDSKTKLDKREDSQSDIKCHGTKEEGDREITS. Positions 232-291 form a DNA-binding region, homeobox; that stretch reads PRKARTAFSDHQLNQLERSFERQKYLSVQDRMDLAAALNLTDTQVKTWYQNRRTKWKRQT.

The protein belongs to the BAR homeobox family.

The protein resides in the nucleus. Potential regulator of neural basic helix-loop-helix genes. This is BarH-like 2 homeobox protein (BARHL2) from Homo sapiens (Human).